Consider the following 272-residue polypeptide: MEGNQAGSSLDSLIASFNKRIGELQELVIARNMYPASTIPDLSAIDTALSSMELQVQSIKDRLREETEAIPKAKKLIEASLKQQGKLQKMSIYAPSHFPDKATMLNSDLNRCLLQENAKQYEQHSTLSSLKFDEEAAVLPKEKKGRGSPPLWYITVEELNSLSSYMRGRLTLEKVNAAINDMASYAEANAHLIAASKQKLAENLWEKALKLRDIVTEQAVKGKHFFLETDMKGPSLKLDNTGKAILTVLRHLGRISETRIGQNRVIILMKPH.

Residues 48–75 (ALSSMELQVQSIKDRLREETEAIPKAKK) adopt a coiled-coil conformation.

Belongs to the SKA1 family.

The polypeptide is SKA complex subunit 1 homolog (Arabidopsis thaliana (Mouse-ear cress)).